Consider the following 538-residue polypeptide: Putative cysteine ligase BshC (538 aa).

Residues 248-268 (ISKYKEVQEGLRNQQEVIKEL) are a coiled coil.

It belongs to the BshC family.

Its function is as follows. Involved in bacillithiol (BSH) biosynthesis. May catalyze the last step of the pathway, the addition of cysteine to glucosamine malate (GlcN-Mal) to generate BSH. This is Putative cysteine ligase BshC from Bacillus cereus (strain B4264).